The sequence spans 222 residues: Lipid A 4'-phosphatase (222 aa).

Topologically, residues 1 to 3 are cytoplasmic; that stretch reads MAR. The chain crosses the membrane as a helical span at residues 4–24; it reads FHIILGLVVCFFAWIFFLIFP. Over 25-58 the chain is Periplasmic; sequence NLDIQFAGHFYNSSAHQFIGGYDGFLGFLHWFAR. A helical membrane pass occupies residues 59-79; sequence FFPIFFSIIVILFLLGSLFID. The Cytoplasmic portion of the chain corresponds to 80–87; sequence KFKIKYRK. Residues 88–108 form a helical membrane-spanning segment; the sequence is AIFFIAVCLWIGPGLVVNYVF. Residues 109-144 are Periplasmic-facing; sequence KDHWGRPRPVMVEQFNGDKIFQPPFVISSQCDKNCS. A helical transmembrane segment spans residues 145–165; that stretch reads FVCGDASMGFWLFAFMPLLAT. The Cytoplasmic portion of the chain corresponds to 166–169; sequence RKKK. The helical transmembrane segment at 170 to 190 threads the bilayer; the sequence is LVAFIAAVVAGGGLGLMRMSQ. Over 191 to 193 the chain is Periplasmic; that stretch reads GGH. The chain crosses the membrane as a helical span at residues 194–214; the sequence is FFSDVVFCGIFVYISTWVVYA. Residues 215–222 are Cytoplasmic-facing; the sequence is LMYRKKEY.

It belongs to the lipid A LpxF 4'-phosphatase family.

Its subcellular location is the cell inner membrane. It participates in bacterial outer membrane biogenesis; LPS lipid A biosynthesis. Its function is as follows. Removes the 4'-phosphate moiety from lipid IV(A) (a tetraacylated precursor of lipid A) and from pentaacylated lipid A, but not from hexaacylated lipid A (as is found in E.coli). Does not dephosphorylate phosphatidic acid, phosphatidylglycerophosphate, or the 1-phosphate group of lipid A and lipid A precursors. Its expression in E.coli confers resistance to the cationic antimicrobial peptide (CAMP) polymyxin B. Plays a critical role in the ability of the bacteria to avoid the host's innate immune system, especially the bactericidal action of CAMPs, although whether it is CAMP-sensitivity or increased sensitivity to the immune system is not clear. The chain is Lipid A 4'-phosphatase from Francisella tularensis subsp. novicida (strain U112).